The sequence spans 703 residues: Elongation factor G 1 (703 aa).

The region spanning 8-290 is the tr-type G domain; it reads ERYRNIGISA…AVIDFLPSPV (283 aa). GTP-binding positions include 17–24, 88–92, and 142–145; these read AHIDAGKT, DTPGH, and NKMD.

It belongs to the TRAFAC class translation factor GTPase superfamily. Classic translation factor GTPase family. EF-G/EF-2 subfamily.

It localises to the cytoplasm. Its function is as follows. Catalyzes the GTP-dependent ribosomal translocation step during translation elongation. During this step, the ribosome changes from the pre-translocational (PRE) to the post-translocational (POST) state as the newly formed A-site-bound peptidyl-tRNA and P-site-bound deacylated tRNA move to the P and E sites, respectively. Catalyzes the coordinated movement of the two tRNA molecules, the mRNA and conformational changes in the ribosome. In Cupriavidus metallidurans (strain ATCC 43123 / DSM 2839 / NBRC 102507 / CH34) (Ralstonia metallidurans), this protein is Elongation factor G 1.